A 689-amino-acid chain; its full sequence is MTTQDFLLEIGCEELPPRRLNQLSQALSQTIKSELEKADLSFENIHRYATPRRLAVLVNNLALQQPQRKIERQGPSVKAAFDKDQTPTLACFGFAQSCGVSTAQLKVKKTKKGEFIYCEIEQPGQNTLDLLPNIIQSALKQLPTPKAMRWGDHKEFFVRPVHWIILMLGKDLVPATLLGKMASCETRGHRFHHPKNILVTKPDDYQKLLLTHGMVIADFEKRREKIRDLIQKAASEKGEAIIDEGLLEEVTGMVEWPVILVGNFKAEFLELPPEVLITTMKVHQRTFPIKNKNGDLLPYFIIVSNIESKNPKRVIVGNERVINARLADASFFYDNDLRTSLENRLPKLGDVIFQRQLGTLADKARRIEKLAAFIAKQINIDEQLAARAGLLSKCDLVSEMVYEFPTLQGIMGYYYAFHDKEPPLVAEAIKEHYLPRFSGDQLPRNLLSPCVAVADRIDTIIGIIGINKSPTGDKDPFALRRAALGILRILIEKELSLDLFALLNEAKNNYAVELPNVNVVNQSFDFIIERLRAWYLEKEVPASVFMAVLASHPDDPLDFDRRIKAVQHFQTLPEADALAAANKRVSNILKKQAAELKSKTIDHSLFDSDAEHLLADQLKERAELVNNLYKKADYTKALSELASLKEPIDIFFDKVMVMVDDKEKRENRLALLSSLQQLFSQIADISLLS.

It belongs to the class-II aminoacyl-tRNA synthetase family. As to quaternary structure, tetramer of two alpha and two beta subunits.

Its subcellular location is the cytoplasm. The enzyme catalyses tRNA(Gly) + glycine + ATP = glycyl-tRNA(Gly) + AMP + diphosphate. This Coxiella burnetii (strain RSA 331 / Henzerling II) protein is Glycine--tRNA ligase beta subunit.